The sequence spans 458 residues: MAGSPSRAAGRRLQLPLLCLFLQGATAVLFAVFVRYNHKTDAALWHRSNHSNADNEFYFRYPSFQDVHAMVFVGFGFLMVFLQRYGFSSVGFTFLLAAFALQWSTLVQGFLHSFHGGHIHVGVESMINADFCAGAVLISFGAVLGKTGPAQLLLMALLEVVLFGINEFVLLHLLGVRDAGGSMTIHTFGAYFGLVLSRVLYRPQLEKSKHRQGSVYHSDLFTMIGTIFLWIFWPSFNAALTALGAGQHRTALNTYYSLAASTLGTFALSALVGEDGRLDMVHIQNAALTGGVVVGTSSKMMLTPFGALAAGFLAGTVSTLGYKFFTPILESKFKVQDTCGVHNLHGMPGVLGALLGVLVAGLATHEAYGDGLESVFPLIAEGQRSATSQAMHQLFGLFVTLMFASVGGGLGGLLLKLPFLDSPPDSQCYEDQVHWQVPGEHEDKAQRPLRVEEADTYA.

The Cytoplasmic portion of the chain corresponds to 1-13; the sequence is MAGSPSRAAGRRL. A helical membrane pass occupies residues 14-34; sequence QLPLLCLFLQGATAVLFAVFV. Residues 35-61 are Extracellular-facing; the sequence is RYNHKTDAALWHRSNHSNADNEFYFRY. N-linked (GlcNAc...) asparagine glycosylation is present at asparagine 49. Residues 62-82 form a helical membrane-spanning segment; it reads PSFQDVHAMVFVGFGFLMVFL. The Cytoplasmic portion of the chain corresponds to 83 to 86; it reads QRYG. A helical transmembrane segment spans residues 87–107; it reads FSSVGFTFLLAAFALQWSTLV. The Extracellular portion of the chain corresponds to 108-124; sequence QGFLHSFHGGHIHVGVE. Residues 125-145 traverse the membrane as a helical segment; that stretch reads SMINADFCAGAVLISFGAVLG. Topologically, residues 146-149 are cytoplasmic; sequence KTGP. Residues 150-170 traverse the membrane as a helical segment; the sequence is AQLLLMALLEVVLFGINEFVL. Residues 171–178 are Extracellular-facing; sequence LHLLGVRD. The helical transmembrane segment at 179–201 threads the bilayer; sequence AGGSMTIHTFGAYFGLVLSRVLY. The Cytoplasmic segment spans residues 202 to 219; it reads RPQLEKSKHRQGSVYHSD. The chain crosses the membrane as a helical span at residues 220–240; the sequence is LFTMIGTIFLWIFWPSFNAAL. Over 241-251 the chain is Extracellular; that stretch reads TALGAGQHRTA. Residues 252-272 form a helical membrane-spanning segment; the sequence is LNTYYSLAASTLGTFALSALV. The Cytoplasmic portion of the chain corresponds to 273–282; the sequence is GEDGRLDMVH. Residues 283–303 form a helical membrane-spanning segment; it reads IQNAALTGGVVVGTSSKMMLT. Residue proline 304 is a topological domain, extracellular. A helical transmembrane segment spans residues 305–325; it reads FGALAAGFLAGTVSTLGYKFF. Over 326 to 346 the chain is Cytoplasmic; sequence TPILESKFKVQDTCGVHNLHG. A helical membrane pass occupies residues 347–367; the sequence is MPGVLGALLGVLVAGLATHEA. Topologically, residues 368–393 are extracellular; it reads YGDGLESVFPLIAEGQRSATSQAMHQ. The helical transmembrane segment at 394–414 threads the bilayer; sequence LFGLFVTLMFASVGGGLGGLL. Topologically, residues 415–458 are cytoplasmic; that stretch reads LKLPFLDSPPDSQCYEDQVHWQVPGEHEDKAQRPLRVEEADTYA. The tract at residues 416–424 is interaction with ANK3; the sequence is KLPFLDSPP. The Basolateral sorting signal motif lies at 429 to 432; sequence YEDQ. The disordered stretch occupies residues 439-458; it reads GEHEDKAQRPLRVEEADTYA.

Belongs to the ammonium transporter (TC 2.A.49) family. Rh subfamily. Interacts (via C-terminus) with ANK2 and ANK3; required for targeting to the basolateral membrane. In terms of processing, N-glycosylated.

It is found in the cell membrane. It localises to the basolateral cell membrane. It catalyses the reaction NH4(+)(in) = NH4(+)(out). The enzyme catalyses methylamine(out) = methylamine(in). It carries out the reaction CO2(out) = CO2(in). In terms of biological role, ammonium transporter involved in the maintenance of acid-base homeostasis. Transports ammonium and its related derivative methylammonium across the basolateral plasma membrane of epithelial cells likely contributing to renal transepithelial ammonia transport and ammonia metabolism. May transport either NH4(+) or NH3 ammonia species predominantly mediating an electrogenic NH4(+) transport. May act as a CO2 channel providing for renal acid secretion. The chain is Ammonium transporter Rh type B (RHBG) from Gorilla gorilla gorilla (Western lowland gorilla).